The chain runs to 469 residues: Septin homolog spn1 (469 aa).

The interval methionine 1–glutamate 58 is disordered. Residues valine 13–aspartate 24 are compositionally biased toward basic and acidic residues. Polar residues predominate over residues aspartate 26–asparagine 38. The 276-residue stretch at glutamine 92–serine 367 folds into the Septin-type G domain. The G1 motif stretch occupies residues glycine 102–serine 109. Residues glycine 102–serine 109, threonine 139, glycine 165, lysine 244–glutamate 252, and arginine 317 contribute to the GTP site. The G3 motif stretch occupies residues aspartate 162–glycine 165. A G4 motif region spans residues alanine 243–aspartate 246. The stretch at serine 383 to lysine 469 forms a coiled coil.

Belongs to the TRAFAC class TrmE-Era-EngA-EngB-Septin-like GTPase superfamily. Septin GTPase family. As to quaternary structure, component of the septin complex composed of two copies of each spn1, spn2, spn3 and spn4.

It is found in the cytoplasm. The protein localises to the cell cortex. Plays a role in the cell cycle. Involved in a late stage of septum formation leading to the separation of the daughter cells. This is Septin homolog spn1 (spn1) from Schizosaccharomyces pombe (strain 972 / ATCC 24843) (Fission yeast).